We begin with the raw amino-acid sequence, 442 residues long: 3-phosphoshikimate 1-carboxyvinyltransferase (442 aa).

3-phosphoshikimate-binding residues include Lys25, Ser26, and Arg30. Lys25 serves as a coordination point for phosphoenolpyruvate. Phosphoenolpyruvate-binding residues include Gly97 and Arg125. The 3-phosphoshikimate site is built by Ser170, Ser171, Gln172, Asp323, and Lys350. Gln172 lines the phosphoenolpyruvate pocket. The active-site Proton acceptor is the Asp323. The phosphoenolpyruvate site is built by Arg354 and Arg399.

Belongs to the EPSP synthase family. Monomer.

The protein resides in the cytoplasm. The catalysed reaction is 3-phosphoshikimate + phosphoenolpyruvate = 5-O-(1-carboxyvinyl)-3-phosphoshikimate + phosphate. It participates in metabolic intermediate biosynthesis; chorismate biosynthesis; chorismate from D-erythrose 4-phosphate and phosphoenolpyruvate: step 6/7. Functionally, catalyzes the transfer of the enolpyruvyl moiety of phosphoenolpyruvate (PEP) to the 5-hydroxyl of shikimate-3-phosphate (S3P) to produce enolpyruvyl shikimate-3-phosphate and inorganic phosphate. The chain is 3-phosphoshikimate 1-carboxyvinyltransferase from Bartonella tribocorum (strain CIP 105476 / IBS 506).